The sequence spans 425 residues: MQTVIKNGTVYQNGRLIHADVLIEDQKIKAIGTDLTGDKVIDATGKLVSPGLVDVHVHYRDPGQTYKEDIETGSKAAAHGGFTTVGAMPNVTPVPDTPDLMKKMVQENKQKGIVHIFQYGPITKNETTDELPDYAALKKAGAFALSNDGHGVQTAQTMYLAMQEAKKNDLIVAAHAQDDSLFNHGIVNEGEKAKELNLPPVTELAETTQIARDLLLAEKTGVHYHICHVSTKTSVELVRMAKACGINVTCEAAPHHLLLTEDDIPKDNGYYKMNPPLRSKEDQAALLVGLLDGTIDLIATDHAPHAKQEKQGGMQNAAFGITGSETAFSTLYTKFVKEDKVFTLEQLLSWLSDQPAKVFGLKKAGVLEPGCPADVAIFDLEHETELKEKDYQSKGINTPFTGQKIYGATVMTMVDGEVVYQRGEK.

The Zn(2+) site is built by H56 and H58. Substrate contacts are provided by residues 58-60 (HYR) and N90. Zn(2+)-binding residues include D148, H175, and H228. N274 contributes to the substrate binding site. A Zn(2+)-binding site is contributed by D301. Residue D301 is part of the active site. Residues H305 and 319–320 (FG) contribute to the substrate site.

The protein belongs to the metallo-dependent hydrolases superfamily. DHOase family. Class I DHOase subfamily. Zn(2+) is required as a cofactor.

The catalysed reaction is (S)-dihydroorotate + H2O = N-carbamoyl-L-aspartate + H(+). It functions in the pathway pyrimidine metabolism; UMP biosynthesis via de novo pathway; (S)-dihydroorotate from bicarbonate: step 3/3. Its function is as follows. Catalyzes the reversible cyclization of carbamoyl aspartate to dihydroorotate. This is Dihydroorotase from Lactobacillus helveticus (strain DPC 4571).